A 415-amino-acid chain; its full sequence is Probable glucuronosyltransferase Os03g0287800 (415 aa).

The Cytoplasmic segment spans residues 1–25 (MGSSTDHGGAGGRGKKGSGSQLWKK). The helical; Signal-anchor for type II membrane protein transmembrane segment at 26–43 (ALLHSSLCFVMGFFTGFA) threads the bilayer. At 44–415 (PSSVSDWTSA…GGRFLSGDFC (372 aa)) the chain is on the lumenal side. Asn78, Asn165, Asn257, and Asn287 each carry an N-linked (GlcNAc...) asparagine glycan.

This sequence belongs to the glycosyltransferase 43 family.

It is found in the golgi apparatus membrane. Involved in the synthesis of glucuronoxylan hemicellulose in secondary cell walls. The polypeptide is Probable glucuronosyltransferase Os03g0287800 (Oryza sativa subsp. japonica (Rice)).